The sequence spans 638 residues: Polypeptide N-acetylgalactosaminyltransferase 15 (638 aa).

Topologically, residues 1 to 12 are cytoplasmic; it reads MLPRKRPRSGRS. The chain crosses the membrane as a helical; Signal-anchor for type II membrane protein span at residues 13–35; that stretch reads RLQFLLLFLTLGCVLMMVILLHP. Residues 36–638 are Lumenal-facing; it reads PPPTLHQAVT…FDQIHPVDER (603 aa). The interval 134 to 157 is disordered; sequence KDWRTEEDGEESEEVLTPLGPDSD. Disulfide bonds link cysteine 181–cysteine 411, cysteine 402–cysteine 481, cysteine 516–cysteine 535, cysteine 561–cysteine 574, and cysteine 602–cysteine 619. The segment at 190-299 is catalytic subdomain A; it reads LPTASVILCF…PGWLEPLLSR (110 aa). The substrate site is built by aspartate 231 and arginine 260. Mn(2+)-binding residues include aspartate 283, histidine 285, and histidine 416. Positions 357–419 are catalytic subdomain B; the sequence is PVRSPVVPRE…PCSRVGHIYR (63 aa). Residue arginine 419 participates in substrate binding. The Ricin B-type lectin domain maps to 503–630; sequence RFSGKLHNTG…GKTSQLWRFD (128 aa). Residue asparagine 573 is glycosylated (N-linked (GlcNAc...) asparagine).

This sequence belongs to the glycosyltransferase 2 family. GalNAc-T subfamily. It depends on Mn(2+) as a cofactor. As to expression, specifically expressed in testis.

The protein localises to the golgi apparatus membrane. The enzyme catalyses L-seryl-[protein] + UDP-N-acetyl-alpha-D-galactosamine = a 3-O-[N-acetyl-alpha-D-galactosaminyl]-L-seryl-[protein] + UDP + H(+). The catalysed reaction is L-threonyl-[protein] + UDP-N-acetyl-alpha-D-galactosamine = a 3-O-[N-acetyl-alpha-D-galactosaminyl]-L-threonyl-[protein] + UDP + H(+). It participates in protein modification; protein glycosylation. Its function is as follows. Catalyzes the initial reaction in O-linked oligosaccharide biosynthesis, the transfer of an N-acetyl-D-galactosamine residue to a serine or threonine residue on the protein receptor. Although it displays a much weaker activity toward all substrates tested compared to GALNT2, it is able to transfer up to seven GalNAc residues to the Muc5AC peptide, suggesting that it can fill vicinal Thr/Ser residues in cooperation with other GALNT proteins. Prefers Muc1a as substrate. This Mus musculus (Mouse) protein is Polypeptide N-acetylgalactosaminyltransferase 15 (Galnt15).